The primary structure comprises 69 residues: Large ribosomal subunit protein uL29 (69 aa).

This sequence belongs to the universal ribosomal protein uL29 family.

In Synechococcus sp. (strain WH7803), this protein is Large ribosomal subunit protein uL29.